Reading from the N-terminus, the 148-residue chain is Lysozyme C (148 aa).

A signal peptide spans 1 to 18 (MKAVIILGLVLLSVTVQG). The C-type lysozyme domain maps to 19-148 (KIFERCELAR…VSQYVQGCGV (130 aa)). 4 disulfides stabilise this stretch: C24-C146, C48-C134, C83-C99, and C95-C113. Catalysis depends on residues E53 and D71.

This sequence belongs to the glycosyl hydrolase 22 family. Monomer.

It catalyses the reaction Hydrolysis of (1-&gt;4)-beta-linkages between N-acetylmuramic acid and N-acetyl-D-glucosamine residues in a peptidoglycan and between N-acetyl-D-glucosamine residues in chitodextrins.. Lysozymes have primarily a bacteriolytic function; those in tissues and body fluids are associated with the monocyte-macrophage system and enhance the activity of immunoagents. This chain is Lysozyme C (LYZ), found in Allenopithecus nigroviridis (Allen's swamp monkey).